A 548-amino-acid chain; its full sequence is Membrane protein insertase YidC (548 aa).

A helical membrane pass occupies residues 6 to 26 (NLLVIALLFVSFMIWQAWEQD). Residues 28–58 (NPQPQQQQTTQTTTTAAGSAADQGVPASGQG) are disordered. Positions 29-42 (PQPQQQQTTQTTTT) are enriched in low complexity. The next 4 helical transmembrane spans lie at 350 to 370 (FLGN…GIMY), 420 to 440 (LGGC…YYML), 458 to 478 (LSAQ…MFFI), and 499 to 519 (PVIF…YYIV).

Belongs to the OXA1/ALB3/YidC family. Type 1 subfamily. Interacts with the Sec translocase complex via SecD. Specifically interacts with transmembrane segments of nascent integral membrane proteins during membrane integration.

The protein resides in the cell inner membrane. Its function is as follows. Required for the insertion and/or proper folding and/or complex formation of integral membrane proteins into the membrane. Involved in integration of membrane proteins that insert both dependently and independently of the Sec translocase complex, as well as at least some lipoproteins. Aids folding of multispanning membrane proteins. The sequence is that of Membrane protein insertase YidC from Enterobacter sp. (strain 638).